We begin with the raw amino-acid sequence, 96 residues long: Protein Vpr (96 aa).

Positions Met-1 to Leu-42 are homooligomerization. Residues Ser-79, Ser-94, and Ser-96 each carry the phosphoserine; by host modification.

Belongs to the HIV-1 VPR protein family. In terms of assembly, homooligomer, may form homodimer. Interacts with p6-gag region of the Pr55 Gag precursor protein through a (Leu-X-X)4 motif near the C-terminus of the P6gag protein. Interacts with host UNG. May interact with host RAD23A/HHR23A. Interacts with host VPRBP/DCAF1, leading to hijack the CUL4A-RBX1-DDB1-DCAF1/VPRBP complex, mediating ubiquitination of host proteins such as TERT and ZGPAT and arrest of the cell cycle in G2 phase. Post-translationally, phosphorylated on several residues by host. These phosphorylations regulate VPR activity for the nuclear import of the HIV-1 pre-integration complex.

The protein resides in the virion. Its subcellular location is the host nucleus. It localises to the host extracellular space. Functionally, during virus replication, may deplete host UNG protein, and incude G2-M cell cycle arrest. Acts by targeting specific host proteins for degradation by the 26S proteasome, through association with the cellular CUL4A-DDB1 E3 ligase complex by direct interaction with host VPRPB/DCAF-1. Cell cycle arrest reportedly occurs within hours of infection and is not blocked by antiviral agents, suggesting that it is initiated by the VPR carried into the virion. Additionally, VPR induces apoptosis in a cell cycle dependent manner suggesting that these two effects are mechanistically linked. Detected in the serum and cerebrospinal fluid of AIDS patient, VPR may also induce cell death to bystander cells. During virus entry, plays a role in the transport of the viral pre-integration (PIC) complex to the host nucleus. This function is crucial for viral infection of non-dividing macrophages. May act directly at the nuclear pore complex, by binding nucleoporins phenylalanine-glycine (FG)-repeat regions. The protein is Protein Vpr of Human immunodeficiency virus type 1 group M subtype D (isolate Z2/CDC-Z34) (HIV-1).